The primary structure comprises 45 residues: Large ribosomal subunit protein bL34 (45 aa).

Residues 1–45 (MTKRTFGGTSRKRKRVSGFRVRMRSHTGRRVIKSRRQKGRERIAV) are disordered. The segment covering 10–39 (SRKRKRVSGFRVRMRSHTGRRVIKSRRQKG) has biased composition (basic residues).

The protein belongs to the bacterial ribosomal protein bL34 family.

The protein is Large ribosomal subunit protein bL34 of Prochlorococcus marinus (strain MIT 9301).